Reading from the N-terminus, the 320-residue chain is Malate dehydrogenase (320 aa).

Residues 10 to 15 and Asp-34 each bind NAD(+); that span reads GSGMIG. Residues Arg-83 and Arg-89 each contribute to the substrate site. NAD(+) is bound by residues Asn-96 and 119–121; that span reads ITN. Residues Asn-121 and Arg-152 each contribute to the substrate site. The active-site Proton acceptor is His-176.

The protein belongs to the LDH/MDH superfamily. MDH type 3 family.

It carries out the reaction (S)-malate + NAD(+) = oxaloacetate + NADH + H(+). In terms of biological role, catalyzes the reversible oxidation of malate to oxaloacetate. The protein is Malate dehydrogenase of Rhizobium rhizogenes (strain K84 / ATCC BAA-868) (Agrobacterium radiobacter).